Consider the following 260-residue polypeptide: UPF0758 protein Smed_1459 (260 aa).

The MPN domain maps to valine 138–phenylalanine 260. Zn(2+) contacts are provided by histidine 209, histidine 211, and aspartate 222. Residues histidine 209–aspartate 222 carry the JAMM motif motif.

This sequence belongs to the UPF0758 family.

The polypeptide is UPF0758 protein Smed_1459 (Sinorhizobium medicae (strain WSM419) (Ensifer medicae)).